The chain runs to 561 residues: MAANEYDYIIVGAGSAGNVLASRLAEDADVTVLLLEAGGPDYRFDFRTQMPAALAYPLQGRRYNWAYETDPEPHMNNRRMECGRGKGLGGSSLINGMCYIRGNALDYDGWAAHAGLENWTYLDCLPYFRKAETRDIGANAYHGGDGPVHVTTSKPGNNPLFAAMVEAGVQAGFPRTDDLNGYQQEGFGPMDRTVTANGRRASTARGYLDRAKARPNLTIVTHAVTDRVLFSGKRAVGVSYLHHGNVLNAQARREVLVCSGAIASPQLLQRSGVGRSTWLRELDVPLVHDLPGVGENLQDHLEMYIQYECKEPVSLYPALQWWNQPAIGLEWMLNGTGIGASNQFEAGGFIRTRDDDPWPNIQYHFLPVAINYNGSNAIRMHGFQAHVGSMRSPSRGRVKLTSRDPNAHPGILFNYMADPLDWREFRDGIRITREIMRQPALDRYRGRELNPGAELTTDEQLDSFVRMRAETAFHPSCSCKMGYDDMAVVDNEGRVHGMQGLRVVDASIMPRITTGNLNAPTIMLAEKIADRIRGREALARVDTPYFVANGVASRKRESATV.

7–36 provides a ligand contact to FAD; that stretch reads DYIIVGAGSAGNVLASRLAEDADVTVLLLE. The Proton acceptor role is filled by His474.

It belongs to the GMC oxidoreductase family. FAD is required as a cofactor.

The enzyme catalyses choline + A = betaine aldehyde + AH2. It catalyses the reaction betaine aldehyde + NAD(+) + H2O = glycine betaine + NADH + 2 H(+). Its pathway is amine and polyamine biosynthesis; betaine biosynthesis via choline pathway; betaine aldehyde from choline (cytochrome c reductase route): step 1/1. Its function is as follows. Involved in the biosynthesis of the osmoprotectant glycine betaine. Catalyzes the oxidation of choline to betaine aldehyde and betaine aldehyde to glycine betaine at the same rate. The polypeptide is Oxygen-dependent choline dehydrogenase (Paraburkholderia xenovorans (strain LB400)).